Here is a 306-residue protein sequence, read N- to C-terminus: Replication termination factor 2 (306 aa).

The tract at residues 193-276 is disordered; sequence AKLEKKTKKP…RSIADSEESE (84 aa). Residues 226 to 240 show a composition bias toward basic and acidic residues; that stretch reads GKPEEASLDSREKKT. The span at 243 to 255 shows a compositional bias: polar residues; it reads APKSTAMNESSSG. At Ser-287 the chain carries Phosphoserine.

The protein belongs to the rtf2 family. In terms of assembly, interacts with DDI2; probably also interacts with DDI1. In terms of processing, undergoes proteasomal degradation, via DDI1 and DDI2. Removal from stalled replisomes and degradation are required for genome stability.

It is found in the chromosome. Its function is as follows. Replication termination factor which is a component of the elongating replisome. Required for ATR pathway signaling upon DNA damage and has a positive activity during DNA replication. Might function to facilitate fork pausing at replication fork barriers like the rDNA. May be globally required to stimulate ATR signaling after the fork stalls or encounters a lesion. Interacts with nascent DNA. The chain is Replication termination factor 2 from Homo sapiens (Human).